The following is a 156-amino-acid chain: Phospholipase A2 A2-hormotoxin-Apt1a (156 aa).

The N-terminal stretch at 1–19 (MQLYTYFFTFSLVLILALA) is a signal peptide. Positions 20-35 (DQENKSLDFTQEGGIA) are excised as a propeptide. Cystine bridges form between C62–C156, C64–C80, C79–C138, C86–C131, and C115–C129. The Ca(2+) site is built by G65 and G67. The active site involves H83. A Ca(2+)-binding site is contributed by D84. The active site involves D132.

It belongs to the phospholipase A2 family. It depends on Ca(2+) as a cofactor.

It is found in the secreted. The protein resides in the nematocyst. It carries out the reaction a 1,2-diacyl-sn-glycero-3-phosphocholine + H2O = a 1-acyl-sn-glycero-3-phosphocholine + a fatty acid + H(+). Sea anemone phospholipase A2 (PLA2) that may have a role both in defense and in digestion, since its expression and enzymatic activity were found both in the acontia (defensive organs) and tentacles. PLA2 catalyzes the calcium-dependent hydrolysis of the 2-acyl groups in 3-sn-phosphoglycerides. The protein is Phospholipase A2 A2-hormotoxin-Apt1a of Adamsia palliata (Cloak anemone).